We begin with the raw amino-acid sequence, 144 residues long: D-aminoacyl-tRNA deacylase (144 aa).

Positions 136-137 match the Gly-cisPro motif, important for rejection of L-amino acids motif; that stretch reads GP.

It belongs to the DTD family. Homodimer.

It localises to the cytoplasm. The catalysed reaction is glycyl-tRNA(Ala) + H2O = tRNA(Ala) + glycine + H(+). It catalyses the reaction a D-aminoacyl-tRNA + H2O = a tRNA + a D-alpha-amino acid + H(+). Its function is as follows. An aminoacyl-tRNA editing enzyme that deacylates mischarged D-aminoacyl-tRNAs. Also deacylates mischarged glycyl-tRNA(Ala), protecting cells against glycine mischarging by AlaRS. Acts via tRNA-based rather than protein-based catalysis; rejects L-amino acids rather than detecting D-amino acids in the active site. By recycling D-aminoacyl-tRNA to D-amino acids and free tRNA molecules, this enzyme counteracts the toxicity associated with the formation of D-aminoacyl-tRNA entities in vivo and helps enforce protein L-homochirality. The polypeptide is D-aminoacyl-tRNA deacylase (Pasteurella multocida (strain Pm70)).